A 127-amino-acid chain; its full sequence is Fatty acid-binding protein, liver (127 aa).

Met-1 is subject to N-acetylmethionine. Ser-11 bears the Phosphoserine mark. N6-succinyllysine is present on residues Lys-31 and Lys-36. Residue Ser-39 is modified to Phosphoserine. N6-succinyllysine is present on Lys-46. At Thr-51 the chain carries Phosphothreonine. A Phosphoserine modification is found at Ser-56. N6-succinyllysine occurs at positions 57, 78, and 90. A Phosphoserine modification is found at Ser-100. An N6-succinyllysine modification is found at Lys-121.

Belongs to the calycin superfamily. Fatty-acid binding protein (FABP) family. As to quaternary structure, monomer.

The protein resides in the cytoplasm. Its function is as follows. Plays a role in lipoprotein-mediated cholesterol uptake in hepatocytes. Binds cholesterol. Binds free fatty acids and their coenzyme A derivatives, bilirubin, and some other small molecules in the cytoplasm. May be involved in intracellular lipid transport. This Sus scrofa (Pig) protein is Fatty acid-binding protein, liver (FABP1).